The chain runs to 977 residues: DNA-directed RNA polymerase 3B, chloroplastic (977 aa).

The N-terminal 71 residues, 1-71, are a transit peptide targeting the chloroplast; that stretch reads MASTASYSPS…NNIQSQTTVC (71 aa). Active-site residues include Asp678, Lys753, and Asp910.

Belongs to the phage and mitochondrial RNA polymerase family.

Its subcellular location is the plastid. It is found in the chloroplast. It carries out the reaction RNA(n) + a ribonucleoside 5'-triphosphate = RNA(n+1) + diphosphate. DNA-dependent RNA polymerase catalyzes the transcription of DNA into RNA using the four ribonucleoside triphosphates as substrates. The chain is DNA-directed RNA polymerase 3B, chloroplastic (RPOT3-TOM) from Nicotiana tabacum (Common tobacco).